The primary structure comprises 591 residues: Coiled-coil domain-containing protein 148 (591 aa).

3 coiled-coil regions span residues 166-195 (VKKQ…SIKI), 352-417 (MLAK…KKKK), and 466-498 (ERRL…KQVA).

This chain is Coiled-coil domain-containing protein 148 (CCDC148), found in Homo sapiens (Human).